The sequence spans 545 residues: Chaperonin GroEL (545 aa).

Residues 30–33 (TLGP), lysine 51, 87–91 (DGTTT), glycine 413, 477–479 (NAA), and aspartate 493 contribute to the ATP site.

It belongs to the chaperonin (HSP60) family. As to quaternary structure, forms a cylinder of 14 subunits composed of two heptameric rings stacked back-to-back. Interacts with the co-chaperonin GroES.

Its subcellular location is the cytoplasm. It carries out the reaction ATP + H2O + a folded polypeptide = ADP + phosphate + an unfolded polypeptide.. Together with its co-chaperonin GroES, plays an essential role in assisting protein folding. The GroEL-GroES system forms a nano-cage that allows encapsulation of the non-native substrate proteins and provides a physical environment optimized to promote and accelerate protein folding. The polypeptide is Chaperonin GroEL (Pseudomonas putida (Arthrobacter siderocapsulatus)).